The following is a 172-amino-acid chain: General stress protein 18 (172 aa).

The PfpI endopeptidase domain maps to 3 to 171; sequence KKIAVVLTYY…FNRESLALLE (169 aa). Cys104 functions as the Nucleophile in the catalytic mechanism. His105 is an active-site residue.

Belongs to the peptidase C56 family.

In terms of biological role, functions in the protection against aldehyde-stress, possibly by degrading damaged proteins. In Bacillus subtilis (strain 168), this protein is General stress protein 18 (yfkM).